The sequence spans 859 residues: MSAHAAPSPEALSRRAEFKAAKADLLERFRSATNVTSLMHALSKLTDSALKRVWDDCGLPATLALVAVGGYGRGELAPHSDVDILVLLPDAHDPALDARIERFIGMAWDLGLEIGSSVRTVAQCIEEASQDVTVQTSLLEARRIFGSTALFERFTVRYHEEALDARAFFTAKVLEMRQRHAKFQDTPYSLEPNVKESPGGLRDLQTILWIARAAGFGSSWRELDTRGLITEREARELRRNEGFLKALRARLHVIAGRRQDVLVFDLQTQAAESFGYRPTQAKRASEQLMRRYYWAAKAVTQLATILIQNIEAQLFPATSGITRVLSHDRFVEKQGMLEIVDDGVFERHPDAILEAFLLYETTRGVKGLSARTLRALYNSREIMNDTWRRDAQNRHTFMQILQQPEGITHAFRLMNQTSVLGRYLLNFRRIVGQMQHDLYHVYTVDQHILMVLRNIRRFAVAEHAHEYPFCSQLIGNFERPWVLYVAALFHDIAKGRGGDHSTLGMADARRFCREHGIGGDDAALIVWLVQHHLTMSQVAQKQDTSDPEVIKRFAAIVGNERYLTALYLLTVADIRGTSPKVWNTWKGKLLEDLYRITLAVLGGAKPDAHSELKSRQEQALALLRLETVPDDAHRALWDQLDVGFFLRHDAADIAWQTRVLYRHVNAETAIVRARPSPIGDALQVLVYVKDRPDLFAGICAYFDRNGLSVLDARVSTTRHGYALDNFIVTQTERDVRYRDIANLVEQQLATRLAETAPLPEPSKGRLSRLSRTFPITPRVDLRADERGQYYILSVSANDRPGLLYSIARVLAEHRVGVHAARINTLGERVEDIFLLDGAGLSDNRLQIQLETELLRAIAV.

A uridylyltransferase region spans residues 1-325 (MSAHAAPSPE…PATSGITRVL (325 aa)). Positions 326–682 (SHDRFVEKQG…ARPSPIGDAL (357 aa)) are uridylyl-removing. In terms of domain architecture, HD spans 444 to 566 (VDQHILMVLR…VGNERYLTAL (123 aa)). ACT domains lie at 683-762 (QVLV…PEPS) and 791-859 (ILSV…AIAV).

The protein belongs to the GlnD family. The cofactor is Mg(2+).

It carries out the reaction [protein-PII]-L-tyrosine + UTP = [protein-PII]-uridylyl-L-tyrosine + diphosphate. The enzyme catalyses [protein-PII]-uridylyl-L-tyrosine + H2O = [protein-PII]-L-tyrosine + UMP + H(+). Its activity is regulated as follows. Uridylyltransferase (UTase) activity is inhibited by glutamine, while glutamine activates uridylyl-removing (UR) activity. Functionally, modifies, by uridylylation and deuridylylation, the PII regulatory proteins (GlnB and homologs), in response to the nitrogen status of the cell that GlnD senses through the glutamine level. Under low glutamine levels, catalyzes the conversion of the PII proteins and UTP to PII-UMP and PPi, while under higher glutamine levels, GlnD hydrolyzes PII-UMP to PII and UMP (deuridylylation). Thus, controls uridylylation state and activity of the PII proteins, and plays an important role in the regulation of nitrogen fixation and metabolism. The chain is Bifunctional uridylyltransferase/uridylyl-removing enzyme from Burkholderia vietnamiensis (strain G4 / LMG 22486) (Burkholderia cepacia (strain R1808)).